Reading from the N-terminus, the 156-residue chain is Protein-export protein SecB (156 aa).

Belongs to the SecB family. As to quaternary structure, homotetramer, a dimer of dimers. One homotetramer interacts with 1 SecA dimer.

It is found in the cytoplasm. Its function is as follows. One of the proteins required for the normal export of preproteins out of the cell cytoplasm. It is a molecular chaperone that binds to a subset of precursor proteins, maintaining them in a translocation-competent state. It also specifically binds to its receptor SecA. This chain is Protein-export protein SecB, found in Pectobacterium carotovorum subsp. carotovorum (strain PC1).